We begin with the raw amino-acid sequence, 504 residues long: L-carnitine/gamma-butyrobetaine antiporter (504 aa).

12 helical membrane passes run 10-30 (IEPK…WLTV), 51-71 (WGWA…WLVF), 92-112 (IFMM…SIEI), 143-163 (GPLP…FFFV), 195-215 (FYLV…TPLV), 231-251 (LDAI…ACGL), 263-283 (SYLS…SFIM), 316-336 (WTVF…IFLA), 347-367 (LCFG…TVLG), 403-423 (LSTA…VTLI), 446-466 (LLVR…LLAL), and 475-495 (AIIA…LSFI).

It belongs to the BCCT transporter (TC 2.A.15) family. CaiT subfamily. In terms of assembly, homotrimer.

The protein localises to the cell inner membrane. The catalysed reaction is 4-(trimethylamino)butanoate(in) + (R)-carnitine(out) = 4-(trimethylamino)butanoate(out) + (R)-carnitine(in). The protein operates within amine and polyamine metabolism; carnitine metabolism. In terms of biological role, catalyzes the exchange of L-carnitine for gamma-butyrobetaine. The protein is L-carnitine/gamma-butyrobetaine antiporter of Escherichia fergusonii (strain ATCC 35469 / DSM 13698 / CCUG 18766 / IAM 14443 / JCM 21226 / LMG 7866 / NBRC 102419 / NCTC 12128 / CDC 0568-73).